The primary structure comprises 245 residues: 4-hydroxy-tetrahydrodipicolinate reductase (245 aa).

NAD(+) is bound by residues 7–12, Asp33, 75–77, and 102–105; these read GAKGKV, GTT, and APNF. Catalysis depends on His132, which acts as the Proton donor/acceptor. A (S)-2,3,4,5-tetrahydrodipicolinate-binding site is contributed by His133. The active-site Proton donor is Lys136. Residue 142 to 143 coordinates (S)-2,3,4,5-tetrahydrodipicolinate; that stretch reads GT.

Belongs to the DapB family.

It is found in the cytoplasm. The enzyme catalyses (S)-2,3,4,5-tetrahydrodipicolinate + NAD(+) + H2O = (2S,4S)-4-hydroxy-2,3,4,5-tetrahydrodipicolinate + NADH + H(+). The catalysed reaction is (S)-2,3,4,5-tetrahydrodipicolinate + NADP(+) + H2O = (2S,4S)-4-hydroxy-2,3,4,5-tetrahydrodipicolinate + NADPH + H(+). It functions in the pathway amino-acid biosynthesis; L-lysine biosynthesis via DAP pathway; (S)-tetrahydrodipicolinate from L-aspartate: step 4/4. Its function is as follows. Catalyzes the conversion of 4-hydroxy-tetrahydrodipicolinate (HTPA) to tetrahydrodipicolinate. This chain is 4-hydroxy-tetrahydrodipicolinate reductase, found in Mycolicibacterium paratuberculosis (strain ATCC BAA-968 / K-10) (Mycobacterium paratuberculosis).